A 403-amino-acid polypeptide reads, in one-letter code: Renin (403 aa).

Positions 1 to 22 (MARCRMPRWGLLLVLWGSCTFG) are cleaved as a signal peptide. Residues 23–65 (LPADTGAFRRIFLKKMPSIRESLKERGVDVAGLGAEWNQFTKR) constitute a propeptide, activation peptide. Residue N70 is glycosylated (N-linked (GlcNAc...) asparagine). The Peptidase A1 domain occupies 85–400 (YYGEIGIGTP…DRHNNRIGFA (316 aa)). The active site involves D103. Residues C116 and C123 are joined by a disulfide bond. N-linked (GlcNAc...) asparagine glycosylation occurs at N140. Residues C279 and C283 are joined by a disulfide bond. D288 is a catalytic residue. C322 and C359 are oxidised to a cystine.

Belongs to the peptidase A1 family. In terms of assembly, interacts with ATP6AP2.

The protein resides in the secreted. It localises to the membrane. It carries out the reaction Cleavage of Leu-|-Xaa bond in angiotensinogen to generate angiotensin I.. Its activity is regulated as follows. Interaction with ATP6AP2 results in a 5-fold increased efficiency in angiotensinogen processing. Renin is a highly specific endopeptidase, whose only known function is to generate angiotensin I from angiotensinogen in the plasma, initiating a cascade of reactions that produce an elevation of blood pressure and increased sodium retention by the kidney. This is Renin (REN) from Canis lupus familiaris (Dog).